The chain runs to 566 residues: Putative sensory transducer protein YvaQ (566 aa).

Residues 1–31 (MRLTISRKFSLVFLTLILINLLVGGIGVLNM) form the signal peptide. Positions 74–110 (DKSKMDTLDQEMNQIMEDINQKLDNYEKTISTDKEQK) form a coiled coil. Residues 186–206 (IYTALLVAASILISIFIWLYI) form a helical membrane-spanning segment. The 54-residue stretch at 208–261 (RNIVKPIIRMKESANHIAEGDLSNDMEALNSKDELGDLNEALQKMVGNLRDIVG) folds into the HAMP domain. One can recognise a Methyl-accepting transducer domain in the interval 280–530 (ATNETRSGSK…ESAAGIEETF (251 aa)). A coiled-coil region spans residues 536–566 (SAHSMDQVLLNAEELEQLANELNEKMGQFTI).

Belongs to the methyl-accepting chemotaxis (MCP) protein family.

The protein localises to the cell membrane. Its function is as follows. Chemotactic-signal transducers respond to changes in the concentration of attractants and repellents in the environment, transduce a signal from the outside to the inside of the cell, and facilitate sensory adaptation through the variation of the level of methylation. Attractants increase the level of methylation while repellents decrease the level of methylation. This chain is Putative sensory transducer protein YvaQ (yvaQ), found in Bacillus subtilis (strain 168).